A 262-amino-acid chain; its full sequence is MLDPIAIQLGPLAIRWYALCIVTGLILAVYLTMKEAPRKKIIPDDILDFILVAFPLAILGARLYYVIFRFDYYSQNLGEIFAIWNGGLAIYGGLITGALVLYIFADRKLINTWDFLDIAAPSVMIAQSLGRWGNFFNQEAYGATVDNLDYLPGFIRDQMYIEGSYRQPTFLYESLWNLLGFALILIFRRKWKSLRRGHITAFYLIWYGFGRMVIEGMRTDSLMFFGLRVSQWLSVVLIGLGIMIVIYQNRKKAPYYITEEEN.

Helical transmembrane passes span 9–29 (LGPL…ILAV), 41–61 (IIPD…ILGA), 80–100 (IFAI…GALV), and 109–129 (LINT…AQSL). A 1,2-diacyl-sn-glycero-3-phospho-(1'-sn-glycerol) is bound at residue Arg131. Helical transmembrane passes span 167–187 (QPTF…ILIF), 197–217 (GHIT…IEGM), and 226–246 (GLRV…MIVI).

The protein belongs to the Lgt family.

Its subcellular location is the cell membrane. The catalysed reaction is L-cysteinyl-[prolipoprotein] + a 1,2-diacyl-sn-glycero-3-phospho-(1'-sn-glycerol) = an S-1,2-diacyl-sn-glyceryl-L-cysteinyl-[prolipoprotein] + sn-glycerol 1-phosphate + H(+). The protein operates within protein modification; lipoprotein biosynthesis (diacylglyceryl transfer). Its function is as follows. Catalyzes the transfer of the diacylglyceryl group from phosphatidylglycerol to the sulfhydryl group of the N-terminal cysteine of a prolipoprotein, the first step in the formation of mature lipoproteins. In Streptococcus pneumoniae (strain P1031), this protein is Phosphatidylglycerol--prolipoprotein diacylglyceryl transferase.